We begin with the raw amino-acid sequence, 170 residues long: Adenine phosphoribosyltransferase (170 aa).

This sequence belongs to the purine/pyrimidine phosphoribosyltransferase family. In terms of assembly, homodimer.

It is found in the cytoplasm. It carries out the reaction AMP + diphosphate = 5-phospho-alpha-D-ribose 1-diphosphate + adenine. It functions in the pathway purine metabolism; AMP biosynthesis via salvage pathway; AMP from adenine: step 1/1. In terms of biological role, catalyzes a salvage reaction resulting in the formation of AMP, that is energically less costly than de novo synthesis. This chain is Adenine phosphoribosyltransferase, found in Kosmotoga olearia (strain ATCC BAA-1733 / DSM 21960 / TBF 19.5.1).